The chain runs to 120 residues: Urease subunit beta (120 aa).

The protein belongs to the urease beta subunit family. Heterotrimer of UreA (gamma), UreB (beta) and UreC (alpha) subunits. Three heterotrimers associate to form the active enzyme.

The protein resides in the cytoplasm. The enzyme catalyses urea + 2 H2O + H(+) = hydrogencarbonate + 2 NH4(+). The protein operates within nitrogen metabolism; urea degradation; CO(2) and NH(3) from urea (urease route): step 1/1. This Corynebacterium efficiens (strain DSM 44549 / YS-314 / AJ 12310 / JCM 11189 / NBRC 100395) protein is Urease subunit beta.